The chain runs to 192 residues: UPF0312 protein PC1_2518 (192 aa).

Residues 1 to 23 (MLKKTLLSLTAVSMLASAGSALA) form the signal peptide.

Belongs to the UPF0312 family. Type 1 subfamily.

It is found in the periplasm. In Pectobacterium carotovorum subsp. carotovorum (strain PC1), this protein is UPF0312 protein PC1_2518.